We begin with the raw amino-acid sequence, 444 residues long: Sperm-associated antigen 4 protein (444 aa).

A disordered region spans residues 1–109; that stretch reads MRRNPRPGSA…GGASEPSGSP (109 aa). Residues 19–36 are compositionally biased toward low complexity; it reads NFYSENSNSSHSATSGDS. 2 consecutive transmembrane segments (helical) span residues 137–159 and 166–188; these read FLSL…LVCV and IRFL…WGLL. Residues 204 to 241 adopt a coiled-coil conformation; sequence LSQYHHRVHSQGQQLQQLQAELSKLHKEVTSVRAAHSE. The SUN domain occupies 267–428; that stretch reads GASIDLEKTS…YRVRAHGVRI (162 aa).

In terms of assembly, self-associates. Interacts with ODF1. May associate with microtubules. Interacts with SUN3 and SYNE1; suggesting the formation of a LINC complexs; a SUN domain-based heterotrimer of SPAG4 and SUN3 may associate with SYNE1. Interacts with SEPT12 and LMNB1; during spermatogenesis. As to expression, testis specific. Exclusively expressed in spermatids.

It is found in the membrane. The protein resides in the cytoplasm. The protein localises to the cytoskeleton. Its subcellular location is the flagellum axoneme. It localises to the nucleus envelope. It is found in the nucleus inner membrane. Involved in spermatogenesis. Required for sperm head formation but not required to establish and maintain general polarity of the sperm head. Required for anchoring and organization of the manchette. Required for targeting of SUN3 and probably SYNE1 through a probable SUN1:SYNE3 LINC complex to the nuclear envelope and involved in accurate posterior sperm head localization of the complex. May anchor SUN3 the nuclear envelope. Involved in maintenance of the nuclear envelope integrity. May assist the organization and assembly of outer dense fibers (ODFs), a specific structure of the sperm tail. The chain is Sperm-associated antigen 4 protein (Spag4) from Rattus norvegicus (Rat).